The primary structure comprises 948 residues: Zinc finger CCCH domain-containing protein 3 (948 aa).

4 disordered regions span residues 25–108, 121–219, 265–296, and 336–493; these read HGNA…VPQQ, QNVV…RRTV, VDAGHTDQPVPSGSVGGPARPASGPRQAREAS, and NVCK…LKKT. The span at 56–74 shows a compositional bias: basic residues; sequence RPSRRGYSSHHGPSWRKKY. The span at 128 to 141 shows a compositional bias: low complexity; sequence KPPSKSGSASASGA. The segment covering 157–166 has biased composition (basic and acidic residues); it reads QRPREGEGEP. Positions 372 to 398 are enriched in low complexity; it reads SAPSKYKWKASSPSASSSSSFRWQSEA. A compositionally biased stretch (polar residues) spans 405–415; that stretch reads SQLSPVLSRSP. Ser408 carries the phosphoserine modification. Residues 441–452 show a composition bias toward basic residues; the sequence is VKSRTKIIRRRS. C3H1-type zinc fingers lie at residues 667–695, 699–722, 723–749, 750–777, and 778–800; these read EKRKEYCMYYNRFGRCNRGERCPYIHDPE, VCTRFVRGTCKKTDGTCPFSHHVS, KEKMPVCSYFLKGICSNSNCPYSHVYV, SRKAEVCSDFLKGYCPLGAKCKKKHTLL, and CPDFARRGACPRGAQCQLLHRTQ. Disordered stretches follow at residues 798–891 and 913–948; these read RTQK…HEAP and ISLQSSPSPGAQPRVRAPRAPLTKDSGKPLHIKPRL. Residues 834 to 846 show a composition bias toward polar residues; sequence SASQRPTRQTPSS. 2 stretches are compositionally biased toward low complexity: residues 847-856 and 864-885; these read AALTAAAVAA and SASPSSSKASSSSSSSSSPPAS. Phosphoserine occurs at positions 918 and 920.

In terms of assembly, interacts with SMAD1, SMAD3, SMAD4, CPSF2 and CPSF3.

Its subcellular location is the nucleus. Functionally, required for the export of polyadenylated mRNAs from the nucleus. Enhances ACVR1B-induced SMAD-dependent transcription. Binds to single-stranded DNA but not to double-stranded DNA in vitro. Involved in RNA cleavage. In Homo sapiens (Human), this protein is Zinc finger CCCH domain-containing protein 3 (ZC3H3).